Consider the following 399-residue polypeptide: Acetate kinase (399 aa).

A Mg(2+)-binding site is contributed by Asn-8. Lys-15 contacts ATP. Arg-89 lines the substrate pocket. Residue Asp-146 is the Proton donor/acceptor of the active site. ATP contacts are provided by residues 206-210, 283-285, and 331-335; these read HVGNG, DMR, and GMGEN. Glu-383 provides a ligand contact to Mg(2+).

This sequence belongs to the acetokinase family. In terms of assembly, homodimer. Requires Mg(2+) as cofactor. It depends on Mn(2+) as a cofactor.

Its subcellular location is the cytoplasm. The enzyme catalyses acetate + ATP = acetyl phosphate + ADP. It functions in the pathway metabolic intermediate biosynthesis; acetyl-CoA biosynthesis; acetyl-CoA from acetate: step 1/2. Catalyzes the formation of acetyl phosphate from acetate and ATP. Can also catalyze the reverse reaction. This chain is Acetate kinase, found in Streptococcus equi subsp. equi (strain 4047).